The primary structure comprises 458 residues: Vitamin K-dependent protein C (458 aa).

An N-terminal signal peptide occupies residues 1-27; sequence IPDDVGYRNQKTASKEGVCVVSKCQDG. Residues 28–36 constitute a propeptide that is removed on maturation; it reads PNTLPRAKR. Positions 37 to 82 constitute a Gla domain; sequence ANSFLEELRPSSLERECVEEVCDLEEAKEIFQSVDDTLAFWYKYVD. 4-carboxyglutamate occurs at positions 42, 43, 50, 52, 55, 56, 61, 62, and 65. The cysteines at positions 53 and 58 are disulfide-linked. Cystine bridges form between Cys86–Cys105, Cys95–Cys100, Cys99–Cys114, and Cys116–Cys125. EGF-like domains follow at residues 91–126 and 130–170; these read SEHPCSSQCCGHGTCADSIGGFSCQCHGGWEGSFCQ and RFSN…LQCE. Asp107 carries the (3R)-3-hydroxyaspartate modification. The N-linked (GlcNAc...) asparagine glycan is linked to Asn133. 5 cysteine pairs are disulfide-bonded: Cys134/Cys145, Cys141/Cys154, Cys156/Cys169, Cys177/Cys316, and Cys235/Cys251. A Peptidase S1 domain is found at 210-447; the sequence is IDGKLTRRGD…YLDWIHSHIE (238 aa). Residue His250 is the Charge relay system of the active site. A glycan (N-linked (GlcNAc...) asparagine) is linked at Asn287. The active-site Charge relay system is Asp296. An N-linked (GlcNAc...) asparagine glycan is attached at Asn352. Disulfide bonds link Cys370/Cys384 and Cys395/Cys423. Ser399 serves as the catalytic Charge relay system.

Belongs to the peptidase S1 family. Synthesized as a single chain precursor, which is cleaved into a light chain and a heavy chain held together by a disulfide bond. The enzyme is then activated by thrombin, which cleaves a tetradecapeptide from the amino end of the heavy chain; this reaction, which occurs at the surface of endothelial cells, is strongly promoted by thrombomodulin. In terms of processing, the vitamin K-dependent, enzymatic carboxylation of some Glu residues allows the modified protein to bind calcium. The iron and 2-oxoglutarate dependent 3-hydroxylation of aspartate and asparagine is (R) stereospecific within EGF domains. As to expression, plasma; synthesized in the liver.

It localises to the secreted. The protein localises to the golgi apparatus. It is found in the endoplasmic reticulum. It catalyses the reaction Degradation of blood coagulation factors Va and VIIIa.. Functionally, protein C is a vitamin K-dependent serine protease that regulates blood coagulation by inactivating factors Va and VIIIa in the presence of calcium ions and phospholipids. Exerts a protective effect on the endothelial cell barrier function. This Oryctolagus cuniculus (Rabbit) protein is Vitamin K-dependent protein C (PROC).